The sequence spans 875 residues: Metal transporter CNNM2 (875 aa).

Residues 1–250 (MIGCGACEPE…TKMIVGEEKK (250 aa)) are Extracellular-facing. Asn112 carries N-linked (GlcNAc...) asparagine glycosylation. The interval 121 to 149 (TEHERRRHTPSERGLGGPAPPEPDSGPQR) is disordered. Residues 251–271 (FLLPFWLQVIFISLLLCLSGM) form a helical membrane-spanning segment. The region spanning 251-431 (FLLPFWLQVI…DPYNDLVKEE (181 aa)) is the CNNM transmembrane domain. The Cytoplasmic segment spans residues 272–313 (FSGLNLGLMALDPMELRIVQNCGTEKEKNYAKRIEPVRRQGN). The segment at residues 314–334 (YLLCSLLLGNVLVNTTLTILL) is an intramembrane region (helical). The Cytoplasmic portion of the chain corresponds to 335 to 338 (DDIA). A helical membrane pass occupies residues 339–359 (GSGLVAVVVSTIGIVIFGEIV). At 360–368 (PQAICSRHG) the chain is on the extracellular side. Residues 369 to 389 (LAVGANTIFLTKFFMMMTFPA) form a helical membrane-spanning segment. The Cytoplasmic portion of the chain corresponds to 390-875 (SYPVSKLLDC…NHSLHSEGAI (486 aa)). 2 consecutive CBS domains span residues 450 to 511 (MTPL…CTPL) and 518 to 584 (YNHP…ILDE). Residues 741 to 763 (AGSPGENKSPPRPCGLNHSDSLS) are disordered. A Phosphoserine modification is found at Ser761.

It belongs to the ACDP family. In terms of assembly, isoform 1 and isoform 2 may interact with each other. In terms of processing, the N-terminus is cleaved within the endoplasmic reticulum. The signal peptidase complex seems to be involved in the processing, but the exact cleavage site has not been identified. As to expression, widely expressed, with highest levels in kidney, lung, spleen and testis. In the kidney, predominantly expressed in the distal convoluted tubule and, at lower levels, in the connecting tubule (at protein level).

The protein localises to the cell membrane. Divalent metal cation transporter. Mediates transport of divalent metal cations in an order of Mg(2+) &gt; Co(2+) &gt; Mn(2+) &gt; Sr(2+) &gt; Ba(2+) &gt; Cu(2+) &gt; Fe(2+). The chain is Metal transporter CNNM2 (Cnnm2) from Mus musculus (Mouse).